A 377-amino-acid chain; its full sequence is Nuclear pore complex protein NUP54 (377 aa).

The span at 1–18 (MFGTPSSSPSFGTPSSTP) shows a compositional bias: low complexity. The segment at 1 to 104 (MFGTPSSSPS…NTAQQQQQTP (104 aa)) is disordered. 7 consecutive repeat copies span residues 2–3 (FG), 11–12 (FG), 20–21 (FG), 27–28 (FG), 36–37 (FG), 49–50 (FG), and 87–88 (FG). The segment at 2–88 (FGTPSSSPSF…FQQQPSSNFG (87 aa)) is 7 X 2 AA repeats of F-G. Over residues 19 to 32 (AFGTSSPAFGTPSA) the composition is skewed to polar residues. Positions 39–104 (PSNPSFSSGG…NTAQQQQQTP (66 aa)) are enriched in low complexity.

The protein belongs to the NUP54 family. As to quaternary structure, part of the nuclear pore complex (NPC). The NPC has an eight-fold symmetrical structure comprising a central transport channel and two rings, the cytoplasmic and nuclear rings, to which eight filaments are attached. The cytoplasmic filaments have loose ends, while the nuclear filaments are joined in a distal ring, forming a nuclear basket. NPCs are highly dynamic in configuration and composition, and can be devided in 3 subcomplexes, the NUP62 subcomplex, the NUP107-160 subcomplex and the NUP93 subcomplex, containing approximately 30 different nucleoporin proteins.

It is found in the nucleus envelope. Its subcellular location is the nucleus. It localises to the nuclear pore complex. The sequence is that of Nuclear pore complex protein NUP54 from Arabidopsis thaliana (Mouse-ear cress).